A 38-amino-acid chain; its full sequence is Large ribosomal subunit protein bL36 (38 aa).

This sequence belongs to the bacterial ribosomal protein bL36 family.

The sequence is that of Large ribosomal subunit protein bL36 from Enterococcus faecalis (strain ATCC 700802 / V583).